Here is a 291-residue protein sequence, read N- to C-terminus: Serine hydrolase BPHL (291 aa).

The first 37 residues, methionine 1–threonine 37, serve as a signal peptide directing secretion. The AB hydrolase-1 domain occupies alanine 62–aspartate 181. N6-acetyllysine occurs at positions 86 and 119. An N6-acetyllysine; alternate modification is found at lysine 126. Lysine 126 bears the N6-succinyllysine; alternate mark. The active-site Nucleophile is serine 139. N6-succinyllysine is present on lysine 184. At lysine 191 the chain carries N6-acetyllysine; alternate. Lysine 191 is subject to N6-succinyllysine; alternate. N6-acetyllysine is present on lysine 217. Residue aspartate 221 participates in Mg(2+) binding. Position 243 is an N6-acetyllysine (lysine 243). The Charge relay system role is filled by aspartate 244. N6-acetyllysine; alternate occurs at positions 260 and 271. Lysine 260 and lysine 271 each carry N6-succinyllysine; alternate. The active-site Charge relay system is the histidine 272.

Belongs to the AB hydrolase superfamily. Lipase family. In terms of assembly, monomer. May also form homodimers. As to expression, expressed at high levels in liver and kidney and lower levels in heart, intestine and skeletal muscle.

Its subcellular location is the mitochondrion. The enzyme catalyses L-homocysteine thiolactone + H2O = L-homocysteine + H(+). It carries out the reaction valacyclovir + H2O = acyclovir + L-valine + H(+). Functionally, specific alpha-amino acid ester serine hydrolase that prefers small, hydrophobic, and aromatic side chains and does not have a stringent requirement for the leaving group other than preferring a primary alcohol. Has homocysteine-thiolactonase activity (in vitro) and may play a significant role in the detoxification of homocysteine thiolactone in vivo. Catalyzes the hydrolytic activation of amino acid ester prodrugs of nucleoside analogs such as valacyclovir and valganciclovir, converting them into their active forms (acyclovir and ganciclovir). The polypeptide is Serine hydrolase BPHL (BPHL) (Homo sapiens (Human)).